Here is a 390-residue protein sequence, read N- to C-terminus: L-seryl-tRNA(Sec) selenium transferase (390 aa).

Lys225 is modified (N6-(pyridoxal phosphate)lysine).

Belongs to the SelA family. It depends on pyridoxal 5'-phosphate as a cofactor.

It localises to the cytoplasm. The enzyme catalyses L-seryl-tRNA(Sec) + selenophosphate + H(+) = L-selenocysteinyl-tRNA(Sec) + phosphate. The protein operates within aminoacyl-tRNA biosynthesis; selenocysteinyl-tRNA(Sec) biosynthesis; selenocysteinyl-tRNA(Sec) from L-seryl-tRNA(Sec) (bacterial route): step 1/1. Its function is as follows. Converts seryl-tRNA(Sec) to selenocysteinyl-tRNA(Sec) required for selenoprotein biosynthesis. The sequence is that of L-seryl-tRNA(Sec) selenium transferase from Helicobacter pylori (strain J99 / ATCC 700824) (Campylobacter pylori J99).